We begin with the raw amino-acid sequence, 262 residues long: Pyridoxine 5'-phosphate synthase (262 aa).

A 3-amino-2-oxopropyl phosphate-binding site is contributed by asparagine 6. A 1-deoxy-D-xylulose 5-phosphate-binding site is contributed by 8-9; it reads DH. Arginine 17 contacts 3-amino-2-oxopropyl phosphate. Histidine 41 acts as the Proton acceptor in catalysis. Positions 43 and 48 each coordinate 1-deoxy-D-xylulose 5-phosphate. Glutamate 68 serves as the catalytic Proton acceptor. 1-deoxy-D-xylulose 5-phosphate is bound at residue threonine 98. The active-site Proton donor is histidine 210. 3-amino-2-oxopropyl phosphate is bound by residues glycine 211 and 232-233; that span reads GQ.

This sequence belongs to the PNP synthase family. Homooctamer; tetramer of dimers.

The protein resides in the cytoplasm. The enzyme catalyses 3-amino-2-oxopropyl phosphate + 1-deoxy-D-xylulose 5-phosphate = pyridoxine 5'-phosphate + phosphate + 2 H2O + H(+). It participates in cofactor biosynthesis; pyridoxine 5'-phosphate biosynthesis; pyridoxine 5'-phosphate from D-erythrose 4-phosphate: step 5/5. Functionally, catalyzes the complicated ring closure reaction between the two acyclic compounds 1-deoxy-D-xylulose-5-phosphate (DXP) and 3-amino-2-oxopropyl phosphate (1-amino-acetone-3-phosphate or AAP) to form pyridoxine 5'-phosphate (PNP) and inorganic phosphate. The chain is Pyridoxine 5'-phosphate synthase from Campylobacter jejuni subsp. jejuni serotype O:23/36 (strain 81-176).